A 1631-amino-acid polypeptide reads, in one-letter code: ALK tyrosine kinase receptor (1631 aa).

The signal sequence occupies residues 1–18; the sequence is MGSVGLLGLLLLRLSVTA. Topologically, residues 19 to 1053 are extracellular; that stretch reads SGSGAGTGSG…PHLPLSLVLS (1035 aa). Residues 20–53 form a disordered region; it reads GSGAGTGSGTGSGTGTGTGQLVGSPATGPALQPR. The segment covering 21-39 has biased composition (gly residues); it reads SGAGTGSGTGSGTGTGTGQ. Residues 60–82 are heparin-binding region; that stretch reads RLQRKSLAVDFVVPSLFRVYARD. 10 N-linked (GlcNAc...) asparagine glycosylation sites follow: Asn185, Asn260, Asn301, Asn340, Asn427, Asn440, Asn461, Asn579, Asn587, and Asn643. Residues 280-443 form the MAM 1 domain; that stretch reads LECSFDFPCE…DFFALKNCSE (164 aa). The 159-residue stretch at 494-652 folds into the MAM 2 domain; sequence FYCNFENGFC…NISISLDCYL (159 aa). Cys703 and Cys716 are oxidised to a cystine. Asn724 carries N-linked (GlcNAc...) asparagine glycosylation. A disulfide bridge connects residues Cys798 and Cys809. Residues Asn823, Asn878, Asn879, and Asn901 are each glycosylated (N-linked (GlcNAc...) asparagine). An intrachain disulfide couples Cys921 to Cys943. Asn1001 carries N-linked (GlcNAc...) asparagine glycosylation. 3 disulfides stabilise this stretch: Cys1002/Cys1010, Cys1005/Cys1021, and Cys1023/Cys1036. Residues 1002–1040 are EGF-like; the sequence is CSHCEGDECHMDPESHKVICFCDHGTVLAEDGVSCIVSP. Residues 1054-1074 traverse the membrane as a helical segment; that stretch reads VVTSALVAALVLAFSGIMIVY. Topologically, residues 1075 to 1631 are cytoplasmic; it reads RRKHQELQAM…DALLKTPPGP (557 aa). Positions 1131 to 1407 constitute a Protein kinase domain; it reads ITLIRGLGHG…IEYCTQDPDV (277 aa). ATP is bound by residues 1137-1145 and Lys1165; that span reads LGHGAFGEV. Residue Asp1264 is the Proton acceptor of the active site. 3 disordered regions span residues 1423–1493, 1526–1554, and 1609–1631; these read EEKV…GHVN, WFTEKPTKKNNPPATKGHHDRGNLGREGS, and FEGTTAPGSSQYEDALLKTPPGP.

Homodimer; homodimerizes following heparin- and ligand-binding. Interacts with CBL, IRS1, PIK3R1 and PLCG1. Interacts with FRS2 and SHC1. Interacts with PTN and MDK. Phosphorylated at tyrosine residues by autocatalysis, which activates kinase activity. In cells not stimulated by a ligand, receptor protein tyrosine phosphatase beta and zeta complex (PTPRB/PTPRZ1) dephosphorylates ALK at the sites in ALK that are undergoing autophosphorylation through autoactivation.

It localises to the cell membrane. The enzyme catalyses L-tyrosyl-[protein] + ATP = O-phospho-L-tyrosyl-[protein] + ADP + H(+). With respect to regulation, activated upon ALKAL2 ligand-binding. ALKAL2-driven activation is coupled with heparin-binding. Following ligand-binding, homodimerizes and autophosphorylates, activating its kinase activity. Inactivated through dephosphorylation by receptor protein tyrosine phosphatase beta and zeta complex (PTPRB/PTPRZ1) when there is no stimulation by a ligand. Its function is as follows. Neuronal receptor tyrosine kinase that is essentially and transiently expressed in specific regions of the central and peripheral nervous systems and plays an important role in the genesis and differentiation of the nervous system. Also acts as a key thinness protein involved in the resistance to weight gain: in hypothalamic neurons, controls energy expenditure acting as a negative regulator of white adipose tissue lipolysis and sympathetic tone to fine-tune energy homeostasis. Following activation by ALKAL2 ligand at the cell surface, transduces an extracellular signal into an intracellular response. In contrast, ALKAL1 is not a potent physiological ligand for ALK. Ligand-binding to the extracellular domain induces tyrosine kinase activation, leading to activation of the mitogen-activated protein kinase (MAPK) pathway. Phosphorylates almost exclusively at the first tyrosine of the Y-x-x-x-Y-Y motif. Induces tyrosine phosphorylation of CBL, FRS2, IRS1 and SHC1, as well as of the MAP kinases MAPK1/ERK2 and MAPK3/ERK1. ALK activation may also be regulated by pleiotrophin (PTN) and midkine (MDK). PTN-binding induces MAPK pathway activation, which is important for the anti-apoptotic signaling of PTN and regulation of cell proliferation. MDK-binding induces phosphorylation of the ALK target insulin receptor substrate (IRS1), activates mitogen-activated protein kinases (MAPKs) and PI3-kinase, resulting also in cell proliferation induction. Drives NF-kappa-B activation, probably through IRS1 and the activation of the AKT serine/threonine kinase. Recruitment of IRS1 to activated ALK and the activation of NF-kappa-B are essential for the autocrine growth and survival signaling of MDK. The polypeptide is ALK tyrosine kinase receptor (Canis lupus familiaris (Dog)).